The primary structure comprises 406 residues: Probable UDP-arabinose 4-epimerase 3 (406 aa).

The Cytoplasmic segment spans residues 1–26; it reads MIPLNRRASQTRGGMEYFDARRKPHN. A helical; Signal-anchor for type II membrane protein membrane pass occupies residues 27–44; it reads VGKVIAALVLTTLCIFIL. Topologically, residues 45–406 are lumenal; the sequence is KQSPGFGGSS…KSHPRGYGSN (362 aa). 65–96 contributes to the NAD(+) binding site; that stretch reads HVLVTGGAGYIGSHASLRLLKDNYRVTIVDNL. Tyrosine 213 serves as the catalytic Proton acceptor.

The protein belongs to the NAD(P)-dependent epimerase/dehydratase family. NAD(+) serves as cofactor.

It is found in the golgi apparatus. It localises to the golgi stack membrane. The enzyme catalyses UDP-beta-L-arabinopyranose = UDP-alpha-D-xylose. It participates in nucleotide-sugar biosynthesis; UDP-L-arabinose biosynthesis; UDP-L-arabinose from UDP-alpha-D-xylose: step 1/1. The protein operates within cell wall biogenesis; cell wall polysaccharide biosynthesis. The protein is Probable UDP-arabinose 4-epimerase 3 (UEL-3) of Oryza sativa subsp. japonica (Rice).